Consider the following 122-residue polypeptide: Large ribosomal subunit protein uL18 (122 aa).

Positions 1–19 are enriched in basic residues; it reads MTKLSRKLQTQKRHRRLRR. The tract at residues 1–21 is disordered; the sequence is MTKLSRKLQTQKRHRRLRRSV.

Belongs to the universal ribosomal protein uL18 family. As to quaternary structure, part of the 50S ribosomal subunit; part of the 5S rRNA/L5/L18/L25 subcomplex. Contacts the 5S and 23S rRNAs.

Its function is as follows. This is one of the proteins that bind and probably mediate the attachment of the 5S RNA into the large ribosomal subunit, where it forms part of the central protuberance. The protein is Large ribosomal subunit protein uL18 of Prochlorococcus marinus (strain MIT 9312).